Consider the following 149-residue polypeptide: SsrA-binding protein (149 aa).

The tract at residues 121 to 149 is disordered; it reads GKKQHDKRADELDKDSKREAQRAMKERQR. Over residues 127 to 149 the composition is skewed to basic and acidic residues; the sequence is KRADELDKDSKREAQRAMKERQR.

This sequence belongs to the SmpB family.

It localises to the cytoplasm. Required for rescue of stalled ribosomes mediated by trans-translation. Binds to transfer-messenger RNA (tmRNA), required for stable association of tmRNA with ribosomes. tmRNA and SmpB together mimic tRNA shape, replacing the anticodon stem-loop with SmpB. tmRNA is encoded by the ssrA gene; the 2 termini fold to resemble tRNA(Ala) and it encodes a 'tag peptide', a short internal open reading frame. During trans-translation Ala-aminoacylated tmRNA acts like a tRNA, entering the A-site of stalled ribosomes, displacing the stalled mRNA. The ribosome then switches to translate the ORF on the tmRNA; the nascent peptide is terminated with the 'tag peptide' encoded by the tmRNA and targeted for degradation. The ribosome is freed to recommence translation, which seems to be the essential function of trans-translation. This chain is SsrA-binding protein, found in Dechloromonas aromatica (strain RCB).